The chain runs to 245 residues: tRNA1(Val) (adenine(37)-N6)-methyltransferase (245 aa).

This sequence belongs to the methyltransferase superfamily. tRNA (adenine-N(6)-)-methyltransferase family.

It localises to the cytoplasm. It carries out the reaction adenosine(37) in tRNA1(Val) + S-adenosyl-L-methionine = N(6)-methyladenosine(37) in tRNA1(Val) + S-adenosyl-L-homocysteine + H(+). Its function is as follows. Specifically methylates the adenine in position 37 of tRNA(1)(Val) (anticodon cmo5UAC). The polypeptide is tRNA1(Val) (adenine(37)-N6)-methyltransferase (Shigella sonnei (strain Ss046)).